Here is a 158-residue protein sequence, read N- to C-terminus: Large ribosomal subunit protein uL30 (158 aa).

This sequence belongs to the universal ribosomal protein uL30 family. As to quaternary structure, part of the 50S ribosomal subunit.

The protein is Large ribosomal subunit protein uL30 of Sulfurisphaera tokodaii (strain DSM 16993 / JCM 10545 / NBRC 100140 / 7) (Sulfolobus tokodaii).